Consider the following 922-residue polypeptide: Protein translocase subunit SecA (922 aa).

ATP contacts are provided by residues Gln-87, 105–109, and Asp-519; that span reads GEGKT. A disordered region spans residues 850–891; the sequence is HASRQMRSIQGNAQHNSMGSFSGSGHGMGPTALSARSRPENA. Over residues 854–865 the composition is skewed to polar residues; sequence QMRSIQGNAQHN. The Zn(2+) site is built by Cys-906, Cys-908, Cys-917, and Cys-918.

It belongs to the SecA family. In terms of assembly, monomer and homodimer. Part of the essential Sec protein translocation apparatus which comprises SecA, SecYEG and auxiliary proteins SecDF. Other proteins may also be involved. Requires Zn(2+) as cofactor.

It localises to the cell inner membrane. The protein resides in the cytoplasm. It carries out the reaction ATP + H2O + cellular proteinSide 1 = ADP + phosphate + cellular proteinSide 2.. Part of the Sec protein translocase complex. Interacts with the SecYEG preprotein conducting channel. Has a central role in coupling the hydrolysis of ATP to the transfer of proteins into and across the cell membrane, serving as an ATP-driven molecular motor driving the stepwise translocation of polypeptide chains across the membrane. The chain is Protein translocase subunit SecA from Treponema denticola (strain ATCC 35405 / DSM 14222 / CIP 103919 / JCM 8153 / KCTC 15104).